A 1058-amino-acid chain; its full sequence is Carbamoyl phosphate synthase large chain (1058 aa).

Positions 1–401 are carboxyphosphate synthetic domain; it reads MPKRKDIQKI…SLLKACRSLE (401 aa). The ATP site is built by R129, R169, G175, G176, R208, I210, E215, G241, I242, H243, Q284, and E298. The ATP-grasp 1 domain maps to 133–327; the sequence is KQLMQELDQP…IAKLAAKIAV (195 aa). Q284, E298, and N300 together coordinate Mg(2+). Residues Q284, E298, and N300 each contribute to the Mn(2+) site. The tract at residues 402–546 is oligomerization domain; the sequence is IGVCHNEMTS…YSTYELENES (145 aa). The interval 547 to 929 is carbamoyl phosphate synthetic domain; it reads VQSNKESILV…ALYKAFEANN (383 aa). The region spanning 671–861 is the ATP-grasp 2 domain; that stretch reads EKALKELGIP…MAQIATKLIL (191 aa). ATP contacts are provided by R707, S746, I748, E752, G777, V778, H779, S780, Q820, and E832. Q820, E832, and N834 together coordinate Mg(2+). Positions 820, 832, and 834 each coordinate Mn(2+). The region spanning 930 to 1058 is the MGS-like domain; the sequence is SHLSEFGQIV…ESRCFNIEAI (129 aa). The allosteric domain stretch occupies residues 930-1058; it reads SHLSEFGQIV…ESRCFNIEAI (129 aa).

It belongs to the CarB family. Composed of two chains; the small (or glutamine) chain promotes the hydrolysis of glutamine to ammonia, which is used by the large (or ammonia) chain to synthesize carbamoyl phosphate. Tetramer of heterodimers (alpha,beta)4. The cofactor is Mg(2+). It depends on Mn(2+) as a cofactor.

It carries out the reaction hydrogencarbonate + L-glutamine + 2 ATP + H2O = carbamoyl phosphate + L-glutamate + 2 ADP + phosphate + 2 H(+). The catalysed reaction is hydrogencarbonate + NH4(+) + 2 ATP = carbamoyl phosphate + 2 ADP + phosphate + 2 H(+). Its pathway is amino-acid biosynthesis; L-arginine biosynthesis; carbamoyl phosphate from bicarbonate: step 1/1. The protein operates within pyrimidine metabolism; UMP biosynthesis via de novo pathway; (S)-dihydroorotate from bicarbonate: step 1/3. In terms of biological role, large subunit of the glutamine-dependent carbamoyl phosphate synthetase (CPSase). CPSase catalyzes the formation of carbamoyl phosphate from the ammonia moiety of glutamine, carbonate, and phosphate donated by ATP, constituting the first step of 2 biosynthetic pathways, one leading to arginine and/or urea and the other to pyrimidine nucleotides. The large subunit (synthetase) binds the substrates ammonia (free or transferred from glutamine from the small subunit), hydrogencarbonate and ATP and carries out an ATP-coupled ligase reaction, activating hydrogencarbonate by forming carboxy phosphate which reacts with ammonia to form carbamoyl phosphate. In Streptococcus pyogenes serotype M49 (strain NZ131), this protein is Carbamoyl phosphate synthase large chain.